The following is a 225-amino-acid chain: Uracil-DNA glycosylase (225 aa).

Asp-65 functions as the Proton acceptor in the catalytic mechanism.

This sequence belongs to the uracil-DNA glycosylase (UDG) superfamily. UNG family.

The protein localises to the cytoplasm. The catalysed reaction is Hydrolyzes single-stranded DNA or mismatched double-stranded DNA and polynucleotides, releasing free uracil.. Excises uracil residues from the DNA which can arise as a result of misincorporation of dUMP residues by DNA polymerase or due to deamination of cytosine. The sequence is that of Uracil-DNA glycosylase from Bacillus thuringiensis (strain Al Hakam).